Here is a 2048-residue protein sequence, read N- to C-terminus: Fanconi anemia group M protein (2048 aa).

Residues methionine 1–serine 37 show a composition bias toward polar residues. The segment at methionine 1–alanine 45 is disordered. Phosphoserine is present on serine 34. The region spanning isoleucine 98–glutamine 266 is the Helicase ATP-binding domain. Residue leucine 111–threonine 118 participates in ATP binding. A DEAH box motif is present at residues aspartate 214–histidine 217. Residues lysine 452 to arginine 627 form the Helicase C-terminal domain. Residues serine 661–glutamate 800 form an interaction with CENPS/CENPSX region. Disordered stretches follow at residues asparagine 1433–lysine 1476, leucine 1518–serine 1540, and isoleucine 1668–leucine 1809. Positions leucine 1518–glutamine 1538 are enriched in acidic residues. Phosphoserine occurs at positions 1673 and 1674. Composition is skewed to polar residues over residues histidine 1703–valine 1745, histidine 1753–aspartate 1767, and glutamate 1786–lysine 1797. Positions leucine 1727–isoleucine 2048 are interaction with FAAP24.

The protein belongs to the DEAD box helicase family. DEAH subfamily. FANCM sub-subfamily. Component of the Fanconi anemia (FA) core complex, which consists of CENPS, CENPX, FANCA, FANCB, FANCC, FANCE, FANCF, FANCG, FANCL, FANCM, FAAP24 and FAAP100. The FA core complex associates with Bloom syndrome (BLM) complex, which consists of at least BLM, DNA topoisomerase 3-alpha/TOP3A, RMI1/BLAP75, RPA1/RPA70 and RPA2/RPA32. This supercomplex between FA and BLM complexes has been called BRAFT. Forms a discrete complex with CENPS and CENPX, called FANCM-MHF; this interaction stimulates DNA binding and replication fork remodeling by FANCM and stabilizes the binding partners. Forms a heterodimer with FAAP24; this interaction increases FANCM single-stranded DNA-binding activity. Post-translationally, phosphorylated; hyperphosphorylated in response to genotoxic stress. As to expression, expressed in germ cells of fetal and adult ovaries. In fetal ovaries, it is present in oogonia but expression is stronger in pachytene stage oocytes. Expressed in oocytes arrested at the diplotene stage of prophase I during the last trimester of pregnancy and in adults. Expressed in the testis.

The protein localises to the nucleus. The enzyme catalyses ATP + H2O = ADP + phosphate + H(+). Its function is as follows. DNA-dependent ATPase component of the Fanconi anemia (FA) core complex. Required for the normal activation of the FA pathway, leading to monoubiquitination of the FANCI-FANCD2 complex in response to DNA damage, cellular resistance to DNA cross-linking drugs, and prevention of chromosomal breakage. In complex with CENPS and CENPX, binds double-stranded DNA (dsDNA), fork-structured DNA (fsDNA) and Holliday junction substrates. Its ATP-dependent DNA branch migration activity can process branched DNA structures such as a movable replication fork. This activity is strongly stimulated in the presence of CENPS and CENPX. In complex with FAAP24, efficiently binds to single-strand DNA (ssDNA), splayed-arm DNA, and 3'-flap substrates. In vitro, on its own, strongly binds ssDNA oligomers and weakly fsDNA, but does not bind to dsDNA. This is Fanconi anemia group M protein (FANCM) from Homo sapiens (Human).